The primary structure comprises 215 residues: uncharacterized protein (215 aa).

The disordered stretch occupies residues 120-147 (HRAPQGTSSYQEGRRAHEATSAESDDDN).

This is an uncharacterized protein from Homo sapiens (Human).